A 122-amino-acid polypeptide reads, in one-letter code: Large ribosomal subunit protein uL14 (122 aa).

Belongs to the universal ribosomal protein uL14 family. Part of the 50S ribosomal subunit. Forms a cluster with proteins L3 and L19. In the 70S ribosome, L14 and L19 interact and together make contacts with the 16S rRNA in bridges B5 and B8.

In terms of biological role, binds to 23S rRNA. Forms part of two intersubunit bridges in the 70S ribosome. This is Large ribosomal subunit protein uL14 from Rickettsia bellii (strain OSU 85-389).